We begin with the raw amino-acid sequence, 391 residues long: Somatostatin receptor type 1 (391 aa).

The tract at residues 1–50 (MFPNGTASSPSSSPSPSPGSCGEGACSRGPGSGAADGMEEPGRNASQNGT) is disordered. The Extracellular portion of the chain corresponds to 1 to 56 (MFPNGTASSPSSSPSPSPGSCGEGACSRGPGSGAADGMEEPGRNASQNGTLSEGQG). Asn-4 carries N-linked (GlcNAc...) asparagine glycosylation. Positions 8–20 (SSPSSSPSPSPGS) are enriched in low complexity. Residues Asn-44 and Asn-48 are each glycosylated (N-linked (GlcNAc...) asparagine). Residues 57-84 (SAILISFIYSVVCLVGLCGNSMVIYVIL) form a helical membrane-spanning segment. The Cytoplasmic segment spans residues 85–94 (RYAKMKTATN). The chain crosses the membrane as a helical span at residues 95 to 120 (IYILNLAIADELLMLSVPFLVTSTLL). Over 121–131 (RHWPFGALLCR) the chain is Extracellular. Residues Cys-130 and Cys-208 are joined by a disulfide bond. A helical transmembrane segment spans residues 132–153 (LVLSVDAVNMFTSIYCLTVLSV). At 154 to 175 (DRYVAVVHPIKAARYRRPTVAK) the chain is on the cytoplasmic side. A helical transmembrane segment spans residues 176–196 (VVNLGVWVLSLLVILPIVVFS). Residues 197–219 (RTAANSDGTVACNMLMPEPAQRW) are Extracellular-facing. Residues 220 to 244 (LVGFVLYTFLMGFLLPVGAICLCYV) traverse the membrane as a helical segment. Over 245-270 (LIIAKMRMVALKAGWQQRKRSERKIT) the chain is Cytoplasmic. The chain crosses the membrane as a helical span at residues 271-296 (LMVMMVVMVFVICWMPFYVVQLVNVF). At 297 to 303 (AEQDDAT) the chain is on the extracellular side. The helical transmembrane segment at 304 to 327 (VSQLSVILGYANSCANPILYGFLS) threads the bilayer. Residues 328-391 (DNFKRSFQRI…GTCASRISTL (64 aa)) are Cytoplasmic-facing. Residue Cys-339 is the site of S-palmitoyl cysteine attachment.

It belongs to the G-protein coupled receptor 1 family. In terms of tissue distribution, jejunum and stomach.

It is found in the cell membrane. In terms of biological role, receptor for somatostatin with higher affinity for somatostatin-14 than -28. This receptor is coupled via pertussis toxin sensitive G proteins to inhibition of adenylyl cyclase. In addition it stimulates phosphotyrosine phosphatase and Na(+)/H(+) exchanger via pertussis toxin insensitive G proteins. The protein is Somatostatin receptor type 1 (Sstr1) of Mus musculus (Mouse).